A 218-amino-acid chain; its full sequence is GEM-like protein 6 (218 aa).

The region spanning 96-174 (KIYKRLFKVC…CKINGVNQSQ (79 aa)) is the GRAM domain.

It belongs to the GEM family.

The polypeptide is GEM-like protein 6 (Arabidopsis thaliana (Mouse-ear cress)).